The following is a 521-amino-acid chain: MQTSGLTLEPPGVASPATLAVAAVTFLTALVLYELFTYRKRRSMPPGPFRWPFIGNTLQIPQVHPWLTYSRWAQVYGDILHLDALGQHIIVINSAKIARELLDKRSAIYSGRPHLVMAGDLAGQDRLLILQPYGDEFRQQRRFISQDLSVAAVRRYYDIQEAAARRLVLGVINDPGSLESQIKVNIASIIMLVTYGYTVKGTDDPFITRPFEVMDNFNASMTPGVWIVDMIPQLKYLPLWTPGATFLKTAKVWRKHLFTTNWMVYSWSKESSENGTARVPNLCASVLTEMEGKVTPQLEESLMWAAGTVLGGGLDTNISTILSFILAMLRFPDVQRKAQVEIDAVVGSERLPEISDRPSLPYIRSVVTEVYRWLPAIPLCIPHALTEDDVYNGVFLPKGSVVMPNVWHMLHDPTIYPDPDAFKPERYGGLDSEMKKVTDLAFGFGRRACPGYQFAQGTIFTIVATMLATCDIVPVVDEHGQNSIPDVGYTTGTIIFPVDVKCTFRPRTEQARAALVEASVL.

A helical membrane pass occupies residues 12–32 (GVASPATLAVAAVTFLTALVL). N-linked (GlcNAc...) asparagine glycans are attached at residues Asn218, Asn274, and Asn317. Cys449 contacts heme.

This sequence belongs to the cytochrome P450 family. Requires heme as cofactor.

It is found in the membrane. The protein operates within secondary metabolite biosynthesis. Cytochrome P450 monooxygenase that is able to use anthracene, carbazole, pyrene, phenanthrene and trans-stilbene as substrates for oxidation. These multifunctional properties against a series of polycyclic aromatic hydrocarbons (PAHs) suggest that CYP105 would play important roles, at least in part, in fungal metabolic systems involved in xenobiotic detoxification. The protein is Cytochrome P450 monooxygenase 105 of Postia placenta (strain ATCC 44394 / Madison 698-R) (Brown rot fungus).